The chain runs to 176 residues: Ribosome maturation factor RimP (176 aa).

This sequence belongs to the RimP family.

It is found in the cytoplasm. Required for maturation of 30S ribosomal subunits. In Mycolicibacterium vanbaalenii (strain DSM 7251 / JCM 13017 / BCRC 16820 / KCTC 9966 / NRRL B-24157 / PYR-1) (Mycobacterium vanbaalenii), this protein is Ribosome maturation factor RimP.